The following is a 1850-amino-acid chain: Chitin synthase V (1850 aa).

Residues 1–27 (MASTLPPLGGGNGGPHTQHSLPSLPAH) form a disordered region. The 779-residue stretch at 1–779 (MASTLPPLGG…EIAGLVDGSA (779 aa)) folds into the Myosin motor domain. 105–112 (GESGSGKS) serves as a coordination point for ATP. Asn245, Asn290, Asn427, Asn481, and Asn558 each carry an N-linked (GlcNAc...) asparagine glycan. Residues 289-309 (NNTSATGDDSGGFSHEGGQTS) form a disordered region. The segment at 593–647 (SKPMRAPSVMSRKGGRGRGIASQRRQQESNLFDSGNTHAESRSPKGGNKGGIDQG) is disordered. Residues 620-630 (ESNLFDSGNTH) are compositionally biased toward polar residues. The tract at residues 656–680 (LDNVQKAVTDPGTNAYFVFCLKPND) is actin-binding. A run of 2 helical transmembrane segments spans residues 884–904 (WVFTVYFLTWFIPDFLIRWIG) and 923–943 (MLIWFMCLVAAFFIVVFPMLI). The Cytochrome b5 heme-binding domain maps to 947 to 1006 (QNVFSAAELSSHNGKDGNSAYVSIRGHVIDLGSFADRHYPSFVSRKTMLNYAGMDVSSLF). N-linked (GlcNAc...) asparagine glycosylation is found at Asn1033, Asn1058, and Asn1186. Residues 1196-1216 (LVLAVSILLVSVIAFKFFAAL) form a helical membrane-spanning segment. N-linked (GlcNAc...) asparagine glycosylation is found at Asn1453 and Asn1559. The next 4 membrane-spanning stretches (helical) occupy residues 1568-1588 (LIPMAQLCGFCCFSMRFVVFI), 1590-1610 (LLSTVVQPVTIAYIVYLIVLV), 1617-1637 (VPITAFILLGAIYGLQAIIFI), and 1644-1664 (MVGWMILYVMAVPVFSFGLPL). Asn1767 is a glycosylation site (N-linked (GlcNAc...) asparagine). The region spanning 1800 to 1850 (LPSDDALLAEIRDILKTADLMTVTKKGIKQELERRFDVPLDAKRAYINSGK) is the DEK-C domain.

It in the N-terminal section; belongs to the TRAFAC class myosin-kinesin ATPase superfamily. Myosin family. In the C-terminal section; belongs to the chitin synthase family. Class V subfamily. In terms of tissue distribution, expressed in conidia and during appressorium formation.

It localises to the cell membrane. The protein localises to the cell septum. It is found in the cell tip. The catalysed reaction is [(1-&gt;4)-N-acetyl-beta-D-glucosaminyl](n) + UDP-N-acetyl-alpha-D-glucosamine = [(1-&gt;4)-N-acetyl-beta-D-glucosaminyl](n+1) + UDP + H(+). Its function is as follows. Polymerizes chitin, a structural polymer of the cell wall and septum, by transferring the sugar moiety of UDP-GlcNAc to the non-reducing end of the growing chitin polymer. Contributes to the production of conidia and the ability of fungal conidia to germinate. Involved in the fungal cell wall integrity and the ability of conidia to withstand biophysical pressure. Required for appressorium formation and evasion of insect cellular and/or humoral defenses, promoting the fungal dimorphic transition to the production of hyphal bodies that occurs within hosts, and ultimately to virulence. The protein is Chitin synthase V of Metarhizium acridum (strain CQMa 102).